Here is a 323-residue protein sequence, read N- to C-terminus: 8-oxo-dGDP phosphatase NUDT18 (323 aa).

The Nudix hydrolase domain maps to 37 to 167; that stretch reads RLRKNVCYVV…DILHLVELAA (131 aa). Leu-58 contacts Mg(2+). A Nudix box motif is present at residues 76–97; sequence GRMEPGETIVEALQREVKEEAG.

The protein belongs to the Nudix hydrolase family. Mn(2+) serves as cofactor. Mg(2+) is required as a cofactor.

The enzyme catalyses 8-oxo-dGDP + H2O = 8-oxo-dGMP + phosphate + H(+). The catalysed reaction is 8-oxo-dADP + H2O = 8-oxo-dAMP + phosphate + H(+). It carries out the reaction 2-oxo-dADP + H2O = 2-oxo-dAMP + phosphate + H(+). It catalyses the reaction 8-oxo-GDP + H2O = 8-oxo-GMP + phosphate + H(+). Its function is as follows. Mediates the hydrolysis of oxidized nucleoside diphosphate derivatives. Hydrolyzes 8-oxo-7,8-dihydroguanine (8-oxo-Gua)-containing deoxyribo- and ribonucleoside diphosphates to the monophosphates. Hydrolyzes 8-oxo-dGDP and 8-oxo-GDP with the same efficiencies. Also hydrolyzes 8-OH-dADP and 2-OH-dADP. Exhibited no or minimal hydrolysis activity against 8-oxo-dGTP, 8-oxo-GTP, dGTP, GTP, dGDP and GDP. Probably removes oxidized guanine nucleotides from both the DNA and RNA precursor pools. This is 8-oxo-dGDP phosphatase NUDT18 from Homo sapiens (Human).